Reading from the N-terminus, the 380-residue chain is Phthiodiolone/phenolphthiodiolone dimycocerosates ketoreductase (380 aa).

It belongs to the mer family. Phthiodiolone/phenolphthiodiolone dimycocerosates ketoreductase subfamily.

In terms of biological role, catalyzes the reduction of the keto moiety of phthiodiolone dimycocerosates (DIM B) and glycosylated phenolphthiodiolone dimycocerosates to form the intermediate compounds phthiotriol and glycosylated phenolphthiotriol dimycocerosates during phthiocerol dimycocerosates (DIM A) and glycosylated phenolphthiocerol dimycocerosates (PGL) biosynthesis. The chain is Phthiodiolone/phenolphthiodiolone dimycocerosates ketoreductase from Mycobacterium sp. (strain JLS).